Reading from the N-terminus, the 139-residue chain is Arsenate reductase (139 aa).

Residues Cys10, Cys82, and Cys89 each act as nucleophile in the active site. Intrachain disulfides connect Cys10–Cys82 and Cys82–Cys89.

Belongs to the low molecular weight phosphotyrosine protein phosphatase family. Thioredoxin-coupled ArsC subfamily.

It localises to the cytoplasm. It catalyses the reaction arsenate + [thioredoxin]-dithiol + H(+) = arsenite + [thioredoxin]-disulfide + H2O. In terms of biological role, catalyzes the reduction of arsenate [As(V)] to arsenite [As(III)]. The chain is Arsenate reductase from Shouchella clausii (strain KSM-K16) (Alkalihalobacillus clausii).